A 275-amino-acid polypeptide reads, in one-letter code: Large ribosomal subunit protein uL2 (275 aa).

The tract at residues 221–275 (RGSAMTPRDHPHGGGEGKAPRGMPPKTPWGKPALGKRTRRNKKSDRFIIRRRYEA) is disordered. Residues 227–239 (PRDHPHGGGEGKA) show a composition bias toward basic and acidic residues. A compositionally biased stretch (basic residues) spans 254 to 263 (LGKRTRRNKK). Residues 264-275 (SDRFIIRRRYEA) are compositionally biased toward basic and acidic residues.

It belongs to the universal ribosomal protein uL2 family. As to quaternary structure, part of the 50S ribosomal subunit. Forms a bridge to the 30S subunit in the 70S ribosome.

In terms of biological role, one of the primary rRNA binding proteins. Required for association of the 30S and 50S subunits to form the 70S ribosome, for tRNA binding and peptide bond formation. It has been suggested to have peptidyltransferase activity; this is somewhat controversial. Makes several contacts with the 16S rRNA in the 70S ribosome. The sequence is that of Large ribosomal subunit protein uL2 from Thermomicrobium roseum (strain ATCC 27502 / DSM 5159 / P-2).